The primary structure comprises 436 residues: Mannan endo-1,4-beta-mannosidase F (436 aa).

The signal sequence occupies residues 1–18; sequence MRSLSSVALLSAIGAASA. The CBM1 domain occupies 19–54; sequence QAGPWGQCAGISHTGPTTCESGWSCVYLNDWYSQCQ. A disordered region spans residues 60 to 88; sequence SSSTTVSSTKQPSSTVAAPSSTTSAHTLP. Residues 79–113 form a ser-rich linker region; it reads SSTTSAHTLPTGSGSFAKTDGLKFNIDGKTKYFAG. Residues 114–436 are catalytic; sequence TNAYWLPFLT…CAVIDHISQI (323 aa). W146 and N260 together coordinate substrate. The active-site Proton donor is the E261. Y336 is a binding site for substrate. E370 serves as the catalytic Nucleophile. W400 lines the substrate pocket.

The protein belongs to the glycosyl hydrolase 5 (cellulase A) family.

The protein localises to the secreted. It catalyses the reaction Random hydrolysis of (1-&gt;4)-beta-D-mannosidic linkages in mannans, galactomannans and glucomannans.. Functionally, endo-1,4-mannanase, a crucial enzyme for depolymerization of seed galactomannans and wood galactoglucomannans. The sequence is that of Mannan endo-1,4-beta-mannosidase F (manF) from Aspergillus clavatus (strain ATCC 1007 / CBS 513.65 / DSM 816 / NCTC 3887 / NRRL 1 / QM 1276 / 107).